The primary structure comprises 206 residues: Ribonuclease HII (206 aa).

The region spanning 19 to 206 (ALIAGVDEVG…GPVKRALGIE (188 aa)) is the RNase H type-2 domain. A divalent metal cation contacts are provided by aspartate 25, glutamate 26, and aspartate 117.

The protein belongs to the RNase HII family. Mn(2+) is required as a cofactor. Requires Mg(2+) as cofactor.

The protein localises to the cytoplasm. The catalysed reaction is Endonucleolytic cleavage to 5'-phosphomonoester.. In terms of biological role, endonuclease that specifically degrades the RNA of RNA-DNA hybrids. The polypeptide is Ribonuclease HII (Vibrio cholerae serotype O1 (strain M66-2)).